A 175-amino-acid chain; its full sequence is Large ribosomal subunit protein uL10 (175 aa).

Belongs to the universal ribosomal protein uL10 family. Part of the ribosomal stalk of the 50S ribosomal subunit. The N-terminus interacts with L11 and the large rRNA to form the base of the stalk. The C-terminus forms an elongated spine to which L12 dimers bind in a sequential fashion forming a multimeric L10(L12)X complex.

In terms of biological role, forms part of the ribosomal stalk, playing a central role in the interaction of the ribosome with GTP-bound translation factors. The sequence is that of Large ribosomal subunit protein uL10 from Synechococcus sp. (strain CC9605).